The chain runs to 30 residues: Glutathione S-transferase (30 aa).

It belongs to the GST superfamily. Monomer and homodimer.

It localises to the cytoplasm. It carries out the reaction RX + glutathione = an S-substituted glutathione + a halide anion + H(+). Its function is as follows. Conjugation of reduced glutathione to a wide number of exogenous and endogenous hydrophobic electrophiles. In Pseudomonas fluorescens, this protein is Glutathione S-transferase.